A 261-amino-acid polypeptide reads, in one-letter code: Taurine import ATP-binding protein TauB (261 aa).

Residues 4–233 (LQLEGIGAHY…RYSAGESARA (230 aa)) form the ABC transporter domain. 38–45 (GPSGSGKT) is an ATP binding site.

This sequence belongs to the ABC transporter superfamily. Taurine importer (TC 3.A.1.17.1) family. As to quaternary structure, the complex is composed of two ATP-binding proteins (TauB), two transmembrane proteins (TauC) and a solute-binding protein (TauA).

The protein localises to the cell inner membrane. It carries out the reaction taurine(out) + ATP + H2O = taurine(in) + ADP + phosphate + H(+). Functionally, part of the ABC transporter complex TauABC involved in taurine import. Responsible for energy coupling to the transport system. The chain is Taurine import ATP-binding protein TauB from Pseudomonas syringae pv. tomato (strain ATCC BAA-871 / DC3000).